The following is a 363-amino-acid chain: Histidinol-phosphate aminotransferase (363 aa).

Lys220 bears the N6-(pyridoxal phosphate)lysine mark.

Belongs to the class-II pyridoxal-phosphate-dependent aminotransferase family. Histidinol-phosphate aminotransferase subfamily. Homodimer. Pyridoxal 5'-phosphate serves as cofactor.

It carries out the reaction L-histidinol phosphate + 2-oxoglutarate = 3-(imidazol-4-yl)-2-oxopropyl phosphate + L-glutamate. It functions in the pathway amino-acid biosynthesis; L-histidine biosynthesis; L-histidine from 5-phospho-alpha-D-ribose 1-diphosphate: step 7/9. This is Histidinol-phosphate aminotransferase from Paramagnetospirillum magneticum (strain ATCC 700264 / AMB-1) (Magnetospirillum magneticum).